Here is a 670-residue protein sequence, read N- to C-terminus: Transcriptional regulatory protein DOT6 (670 aa).

Positions 1–44 (MSISTSLNSASIHLSSMDTHPQLHSLTRQPHSSSTAMSKNEAQE) are enriched in polar residues. Residues 1–78 (MSISTSLNSA…SKNPSSWDPQ (78 aa)) form a disordered region. The span at 45-74 (SSPSLPASSSSSTSASASASSKNSSKNPSS) shows a compositional bias: low complexity. Residues 67 to 121 (NSSKNPSSWDPQDDLLLRHLKEVKKMGWKDISQYFPNRTPNACQFRWRRLKSGNL) form the HTH myb-type domain. The segment at residues 94–117 (WKDISQYFPNRTPNACQFRWRRLK) is a DNA-binding region (H-T-H motif). Residues 226–242 (HHPHQHLHHHPHHKTLK) are compositionally biased toward basic residues. Disordered regions lie at residues 226-250 (HHPH…SHSF), 293-332 (TTPS…NTSR), 406-436 (HSSS…CNPT), and 483-659 (ADML…NSPL). A phosphoserine mark is found at serine 245 and serine 247. Low complexity-rich tracts occupy residues 295–307 (PSSP…LLSS) and 316–332 (NWSR…NTSR). Over residues 425–436 (SGHSMKSSCNPT) the composition is skewed to polar residues. Position 487 is a phosphoserine (serine 487). Threonine 489 is modified (phosphothreonine). Serine 491 bears the Phosphoserine mark. Residues 512–522 (DDDKGSDKEDV) show a composition bias toward basic and acidic residues. 2 stretches are compositionally biased toward low complexity: residues 544-561 (SSNK…SSKD) and 587-598 (TITSDTSSSAAT). The span at 599–608 (MNRTPNSKNP) shows a compositional bias: polar residues. Over residues 622-659 (ITPRPKPSSTTTSITTETTNNMINHSSSTTTTTNNSPL) the composition is skewed to low complexity.

This sequence belongs to the DOT6 family. Component of the RPD3C(L) complex composed of at least ASH1, CTI6, DEP1, DOT6, PHO23, RPD3, RXT2, RXT3, SAP30, SDS3, SIN3, TOD6; UME1 and UME6.

The protein resides in the nucleus. In terms of biological role, component of the RPD3 histone deacetylase complex RPD3C(L) responsible for the deacetylation of lysine residues on the N-terminal part of the core histones (H2A, H2B, H3 and H4). Histone deacetylation gives a tag for epigenetic repression and plays an important role in transcriptional regulation, cell cycle progression and developmental events. DOT6 binds to sequences containing the core CGATG, which resembles the PAC (Polymerase A and C) motif. This is Transcriptional regulatory protein DOT6 (DOT6) from Saccharomyces cerevisiae (strain ATCC 204508 / S288c) (Baker's yeast).